The sequence spans 906 residues: Putative disease resistance protein At1g59780 (906 aa).

A coiled-coil region spans residues 20–59; that stretch reads KLLSQEYERFQGVEEQITELRDDLKMLMAFLSDADAKKQT. Residues 138 to 452 form the NB-ARC domain; sequence SHAQLERKRE…AEGITYPGNY (315 aa). 187 to 194 provides a ligand contact to ATP; it reads GLGGLGKT. LRR repeat units follow at residues 572–597, 599–619, 620–644, and 825–850; these read LPLL…IGKL, HLKY…SLRN, LKSL…VFKE, and MPLL…RFIS.

It belongs to the disease resistance NB-LRR family.

In terms of biological role, potential disease resistance protein. The chain is Putative disease resistance protein At1g59780 from Arabidopsis thaliana (Mouse-ear cress).